Reading from the N-terminus, the 385-residue chain is Pectate lyase E (385 aa).

Residues 1–30 form the signal peptide; it reads MKNTRVRSIGTKSLLAAVVTAALMATSAYA. Residue D164 coordinates Ca(2+). Repeat 1 spans residues 177 to 182; sequence DHVTIS. Positions 177 to 218 are 2 X 6 AA approximate repeats; it reads DHVTISDGSFTDDKYTTKDGEKYVQHDGALDIKKGSDYVTIS. Residue D207 coordinates Ca(2+). Repeat unit 2 spans residues 213-218; it reads DYVTIS. R260 is a catalytic residue.

It belongs to the polysaccharide lyase 1 family. PLBC subfamily. Ca(2+) serves as cofactor.

The protein localises to the secreted. The enzyme catalyses Eliminative cleavage of (1-&gt;4)-alpha-D-galacturonan to give oligosaccharides with 4-deoxy-alpha-D-galact-4-enuronosyl groups at their non-reducing ends.. It functions in the pathway glycan metabolism; pectin degradation; 2-dehydro-3-deoxy-D-gluconate from pectin: step 2/5. Involved in maceration and soft-rotting of plant tissue. This is Pectate lyase E (pelE) from Dickeya chrysanthemi (Pectobacterium chrysanthemi).